The sequence spans 437 residues: Nuclear hormone receptor family member nhr-28 (437 aa).

Positions 5-80 form a DNA-binding region, nuclear receptor; it reads KSPCSVCGEA…VGMRKSAVQR (76 aa). NR C4-type zinc fingers lie at residues 8–28 and 44–68; these read CSVCGEAGDGAHFGAEACRAC and CRAMGTCVIQKNVRCMCRACRFTKC. The 262-residue stretch at 115 to 376 folds into the NR LBD domain; the sequence is YEETGMPTLS…ETFYELVSGR (262 aa).

This sequence belongs to the nuclear hormone receptor family. As to expression, expressed in the pharynx, intestine and hypodermis.

The protein localises to the nucleus. In terms of biological role, orphan nuclear receptor. The polypeptide is Nuclear hormone receptor family member nhr-28 (nhr-28) (Caenorhabditis elegans).